A 193-amino-acid chain; its full sequence is Holliday junction branch migration complex subunit RuvA (193 aa).

Positions 1–64 are domain I; the sequence is MIGRIAGILL…EDAHLLYGFL (64 aa). The domain II stretch occupies residues 65-139; the sequence is TPQERTTFRE…GKLGADLGAL (75 aa). Residues 139–143 form a flexible linker region; sequence LAGAA. Positions 144 to 193 are domain III; the sequence is SASDHATDILNALLALGYSEKEGLAAIKNVPAGTGVSEGIKLALKALSKA.

Belongs to the RuvA family. As to quaternary structure, homotetramer. Forms an RuvA(8)-RuvB(12)-Holliday junction (HJ) complex. HJ DNA is sandwiched between 2 RuvA tetramers; dsDNA enters through RuvA and exits via RuvB. An RuvB hexamer assembles on each DNA strand where it exits the tetramer. Each RuvB hexamer is contacted by two RuvA subunits (via domain III) on 2 adjacent RuvB subunits; this complex drives branch migration. In the full resolvosome a probable DNA-RuvA(4)-RuvB(12)-RuvC(2) complex forms which resolves the HJ.

It localises to the cytoplasm. Functionally, the RuvA-RuvB-RuvC complex processes Holliday junction (HJ) DNA during genetic recombination and DNA repair, while the RuvA-RuvB complex plays an important role in the rescue of blocked DNA replication forks via replication fork reversal (RFR). RuvA specifically binds to HJ cruciform DNA, conferring on it an open structure. The RuvB hexamer acts as an ATP-dependent pump, pulling dsDNA into and through the RuvAB complex. HJ branch migration allows RuvC to scan DNA until it finds its consensus sequence, where it cleaves and resolves the cruciform DNA. The chain is Holliday junction branch migration complex subunit RuvA from Burkholderia cenocepacia (strain HI2424).